A 128-amino-acid polypeptide reads, in one-letter code: Protein yippee-like At3g08990 (128 aa).

One can recognise a Yippee domain in the interval 12-109 (LVYSCKYCQT…LERFKVLGPY (98 aa)). The Zn(2+) site is built by Cys-16, Cys-19, Cys-72, and Cys-75.

The protein belongs to the yippee family.

This is Protein yippee-like At3g08990 from Arabidopsis thaliana (Mouse-ear cress).